A 461-amino-acid polypeptide reads, in one-letter code: Protein transport protein HofB homolog (461 aa).

222–229 is an ATP binding site; the sequence is GPTGSGKT.

Belongs to the GSP E family.

The polypeptide is Protein transport protein HofB homolog (hofB) (Escherichia coli (strain K12)).